Here is a 721-residue protein sequence, read N- to C-terminus: Polyribonucleotide nucleotidyltransferase (721 aa).

Residues Asp495 and Asp501 each contribute to the Mg(2+) site. The region spanning 562–621 (PRITTIKIRPERIKDIIGPGGKTIKDITARTGTSINIEDDGSVSIASPNQDKVEEAIKMI) is the KH domain. One can recognise an S1 motif domain in the interval 631–699 (GRIYLGTVRK…RSGKIRLSRK (69 aa)). The segment at 699-721 (KEALADSAKKSEGTEPPKGEPAK) is disordered.

Belongs to the polyribonucleotide nucleotidyltransferase family. Mg(2+) serves as cofactor.

Its subcellular location is the cytoplasm. It carries out the reaction RNA(n+1) + phosphate = RNA(n) + a ribonucleoside 5'-diphosphate. Functionally, involved in mRNA degradation. Catalyzes the phosphorolysis of single-stranded polyribonucleotides processively in the 3'- to 5'-direction. The protein is Polyribonucleotide nucleotidyltransferase of Anaeromyxobacter sp. (strain K).